We begin with the raw amino-acid sequence, 766 residues long: Leucine-rich repeat and fibronectin type III domain-containing protein 1 (766 aa).

The first 31 residues, 1 to 31 (MAPGPFSSGLLSPPPAALPFLLLLWAGASRG), serve as a signal peptide directing secretion. The LRRNT domain maps to 32–65 (QPCPGRCICQNVAPTLTMLCAKTGLLFVPPAIDR). The Extracellular portion of the chain corresponds to 32–536 (QPCPGRCICQ…LRAHFLGGTM (505 aa)). LRR repeat units lie at residues 66–87 (RVVELRLTDNFIAAVRRRDFAN), 90–111 (SLVHLTLSRNTIGQVAAGAFAD), 114–135 (ALRALHLDSNRLAEVRGDQLRG), 138–159 (NLRHLILGNNQIRKVESAAFDA), 163–184 (TVEDLDLSYNNLEALPWEAVGQ), 187–208 (NLNTLTLDHNLIDHIAEGTFVQ), and 211–232 (KLVRLDMTSNRLHKLPPDGLFL). Residue Asn87 is glycosylated (N-linked (GlcNAc...) asparagine). One can recognise an LRRCT domain in the interval 252–298 (NPLHCNCELLWLRRLTREDDLETCATPEHLTDRYFWSIPEEEFLCEP). Residues 299–386 (PLITRQAGGR…GEATAPVEVC (88 aa)) form the Ig-like domain. Cys321 and Cys370 are disulfide-bonded. Asn343 carries an N-linked (GlcNAc...) asparagine glycan. The disordered stretch occupies residues 397-422 (PAAPPPLTEPGSSDIATPGRPGANDS). One can recognise a Fibronectin type-III domain in the interval 424 to 520 (TERRLVAAEL…GCVQFTTAGD (97 aa)). Residues 537–557 (IIAIGGVIVASVLVFIVLLMI) form a helical membrane-spanning segment. Residues 558-766 (RYKVYGDGDS…STEWMLESTV (209 aa)) lie on the Cytoplasmic side of the membrane. 2 disordered regions span residues 568–601 (RRIKGTSRSPPRVSHVCSQTNGSSAQQASAPPAP) and 646–742 (CLLP…GEDG). At Ser713 the chain carries Phosphoserine. The segment covering 714-727 (YPRRARRTKRHRST) has biased composition (basic residues).

The protein belongs to the LRFN family. As to quaternary structure, forms heteromeric complexes with LRFN2, LRFN4 and LRFN5; binding to LRFN2 and LRFN5 may be weaker than that to LRFN4. Also interacts with LRFN3. Forms homomeric complexes, but not across cell junctions. Interacts with DLG1, DLG2 and DLG4, but not with MAGI2, not CASK. Interacts with DLG3. Interacts with 2 AMPA receptor subunits GRIA1 and GRIA2 and NMDA receptor subunit GRIN1. Glycosylated. In terms of tissue distribution, mainly expressed in brain (at protein level) and testis. In brain, found in cerebral cortex (including pyramidal neurons), hippocampus (including CA3 and CA1 neurons), dentate gyrus, cerebellum (including Purkinje neurons) (at protein level) (at protein level). Also expressed in the olfactory bulb.

It localises to the membrane. Its subcellular location is the synapse. It is found in the postsynaptic density membrane. In terms of biological role, promotes neurite outgrowth in hippocampal neurons. Involved in the regulation of the differentiation and maintenance of excitatory synapses. Induces the clustering of excitatory postsynaptic proteins, including DLG4, DLGAP1, GRIA1 and GRIN1. The polypeptide is Leucine-rich repeat and fibronectin type III domain-containing protein 1 (Lrfn1) (Rattus norvegicus (Rat)).